The following is a 282-amino-acid chain: Deoxyribonuclease-1 (282 aa).

The first 22 residues, 1–22 (MRGARLTGALLALAGLLQVALS), serve as a signal peptide directing secretion. N-linked (GlcNAc...) asparagine glycosylation is present at Asn40. Glu100 is a catalytic residue. An intrachain disulfide couples Cys123 to Cys126. Asn128 is a glycosylation site (N-linked (GlcNAc...) asparagine). His156 is a catalytic residue. The cysteines at positions 195 and 231 are disulfide-linked.

It belongs to the DNase I family. Requires Ca(2+) as cofactor. Mg(2+) is required as a cofactor.

It is found in the secreted. It localises to the zymogen granule. The protein resides in the nucleus envelope. It catalyses the reaction Endonucleolytic cleavage to 5'-phosphodinucleotide and 5'-phosphooligonucleotide end-products.. Its function is as follows. Serum endocuclease secreted into body fluids by a wide variety of exocrine and endocrine organs. Expressed by non-hematopoietic tissues and preferentially cleaves protein-free DNA. Among other functions, seems to be involved in cell death by apoptosis. Binds specifically to G-actin and blocks actin polymerization. Together with DNASE1L3, plays a key role in degrading neutrophil extracellular traps (NETs). NETs are mainly composed of DNA fibers and are released by neutrophils to bind pathogens during inflammation. Degradation of intravascular NETs by DNASE1 and DNASE1L3 is required to prevent formation of clots that obstruct blood vessels and cause organ damage following inflammation. The protein is Deoxyribonuclease-1 (DNASE1) of Equus caballus (Horse).